Here is a 323-residue protein sequence, read N- to C-terminus: Ribosomal protein L11 methyltransferase (323 aa).

S-adenosyl-L-methionine is bound by residues Thr160, Gly184, Asp206, and Asn257.

Belongs to the methyltransferase superfamily. PrmA family.

The protein resides in the cytoplasm. The catalysed reaction is L-lysyl-[protein] + 3 S-adenosyl-L-methionine = N(6),N(6),N(6)-trimethyl-L-lysyl-[protein] + 3 S-adenosyl-L-homocysteine + 3 H(+). Methylates ribosomal protein L11. The polypeptide is Ribosomal protein L11 methyltransferase (Agathobacter rectalis (strain ATCC 33656 / DSM 3377 / JCM 17463 / KCTC 5835 / VPI 0990) (Eubacterium rectale)).